The primary structure comprises 396 residues: 1-deoxy-D-xylulose 5-phosphate reductoisomerase (396 aa).

Residues threonine 13, glycine 14, serine 15, isoleucine 16, and asparagine 127 each coordinate NADPH. Lysine 128 is a 1-deoxy-D-xylulose 5-phosphate binding site. Glutamate 129 lines the NADPH pocket. A Mn(2+)-binding site is contributed by aspartate 153. 4 residues coordinate 1-deoxy-D-xylulose 5-phosphate: serine 154, glutamate 155, serine 184, and histidine 207. Glutamate 155 is a Mn(2+) binding site. Glycine 213 contacts NADPH. Residues serine 220, asparagine 225, lysine 226, and glutamate 229 each coordinate 1-deoxy-D-xylulose 5-phosphate. Glutamate 229 is a Mn(2+) binding site.

The protein belongs to the DXR family. It depends on Mg(2+) as a cofactor. Requires Mn(2+) as cofactor.

The catalysed reaction is 2-C-methyl-D-erythritol 4-phosphate + NADP(+) = 1-deoxy-D-xylulose 5-phosphate + NADPH + H(+). The protein operates within isoprenoid biosynthesis; isopentenyl diphosphate biosynthesis via DXP pathway; isopentenyl diphosphate from 1-deoxy-D-xylulose 5-phosphate: step 1/6. Catalyzes the NADPH-dependent rearrangement and reduction of 1-deoxy-D-xylulose-5-phosphate (DXP) to 2-C-methyl-D-erythritol 4-phosphate (MEP). The protein is 1-deoxy-D-xylulose 5-phosphate reductoisomerase of Pseudomonas syringae pv. syringae (strain B728a).